Reading from the N-terminus, the 105-residue chain is MNSSLDFLILILMFGGTSSNSVKQTGQITVSEGASVTMNCTYTSTGYPTLFWYVEYPSKPLQLLQRETMENSKNFGGGNIKDKNSPIVKYSVQVSDSAVYYCLLG.

Residues 1 to 19 (MNSSLDFLILILMFGGTSS) form the signal peptide. Residues 20–105 (NSVKQTGQIT…DSAVYYCLLG (86 aa)) enclose the Ig-like domain. An N-linked (GlcNAc...) asparagine glycan is attached at N39. The cysteines at positions 40 and 102 are disulfide-linked.

As to quaternary structure, alpha-beta TR is a heterodimer composed of an alpha and beta chain; disulfide-linked. The alpha-beta TR is associated with the transmembrane signaling CD3 coreceptor proteins to form the TR-CD3 (TcR or TCR). The assembly of alpha-beta TR heterodimers with CD3 occurs in the endoplasmic reticulum where a single alpha-beta TR heterodimer associates with one CD3D-CD3E heterodimer, one CD3G-CD3E heterodimer and one CD247 homodimer forming a stable octameric structure. CD3D-CD3E and CD3G-CD3E heterodimers preferentially associate with TR alpha and TR beta chains, respectively. The association of the CD247 homodimer is the last step of TcR assembly in the endoplasmic reticulum and is required for transport to the cell surface.

Its subcellular location is the cell membrane. In terms of biological role, v region of the variable domain of T cell receptor (TR) alpha chain that participates in the antigen recognition. Alpha-beta T cell receptors are antigen specific receptors which are essential to the immune response and are present on the cell surface of T lymphocytes. Recognize peptide-major histocompatibility (MH) (pMH) complexes that are displayed by antigen presenting cells (APC), a prerequisite for efficient T cell adaptive immunity against pathogens. Binding of alpha-beta TR to pMH complex initiates TR-CD3 clustering on the cell surface and intracellular activation of LCK that phosphorylates the ITAM motifs of CD3G, CD3D, CD3E and CD247 enabling the recruitment of ZAP70. In turn ZAP70 phosphorylates LAT, which recruits numerous signaling molecules to form the LAT signalosome. The LAT signalosome propagates signal branching to three major signaling pathways, the calcium, the mitogen-activated protein kinase (MAPK) kinase and the nuclear factor NF-kappa-B (NF-kB) pathways, leading to the mobilization of transcription factors that are critical for gene expression and essential for T cell growth and differentiation. The T cell repertoire is generated in the thymus, by V-(D)-J rearrangement. This repertoire is then shaped by intrathymic selection events to generate a peripheral T cell pool of self-MH restricted, non-autoaggressive T cells. Post-thymic interaction of alpha-beta TR with the pMH complexes shapes TR structural and functional avidity. This Homo sapiens (Human) protein is T cell receptor alpha variable 40.